A 176-amino-acid polypeptide reads, in one-letter code: Probable DNA-directed RNA polymerase subunit delta (176 aa).

The region spanning 14-81 (LSLIDVAHFI…GNNMWGLRAW (68 aa)) is the HTH HARE-type domain. Disordered regions lie at residues 91 to 119 (VQTQ…VDYD) and 140 to 176 (DEDE…PEDK). Composition is skewed to acidic residues over residues 105–119 (DDDD…VDYD) and 159–176 (TVED…PEDK).

This sequence belongs to the RpoE family. In terms of assembly, RNAP is composed of a core of 2 alpha, a beta and a beta' subunits. The core is associated with a delta subunit and one of several sigma factors.

Its function is as follows. Participates in both the initiation and recycling phases of transcription. In the presence of the delta subunit, RNAP displays an increased specificity of transcription, a decreased affinity for nucleic acids, and an increased efficiency of RNA synthesis because of enhanced recycling. The polypeptide is Probable DNA-directed RNA polymerase subunit delta (Listeria welshimeri serovar 6b (strain ATCC 35897 / DSM 20650 / CCUG 15529 / CIP 8149 / NCTC 11857 / SLCC 5334 / V8)).